The chain runs to 185 residues: Ubiquitin-conjugating enzyme E2 2 (185 aa).

Positions Pro-4–Leu-150 constitute a UBC core domain. Cys-88 serves as the catalytic Glycyl thioester intermediate. Acidic residues predominate over residues Trp-149–Ala-173. The tract at residues Trp-149–Ala-185 is disordered.

It belongs to the ubiquitin-conjugating enzyme family.

The protein localises to the cytoplasm. The protein resides in the nucleus. The enzyme catalyses S-ubiquitinyl-[E1 ubiquitin-activating enzyme]-L-cysteine + [E2 ubiquitin-conjugating enzyme]-L-cysteine = [E1 ubiquitin-activating enzyme]-L-cysteine + S-ubiquitinyl-[E2 ubiquitin-conjugating enzyme]-L-cysteine.. Its pathway is protein modification; protein ubiquitination. In terms of biological role, catalyzes the covalent attachment of ubiquitin to other proteins. Plays a role in transcription regulation by catalyzing the monoubiquitination of histone H2B to form H2BK123ub1. H2BK123ub1 gives a specific tag for epigenetic transcriptional activation and is also a prerequisite for H3K4me and H3K79me formation. Also involved in postreplication repair of UV-damaged DNA, in N-end rule-dependent protein degradation and in sporulation. This Mycosarcoma maydis (Corn smut fungus) protein is Ubiquitin-conjugating enzyme E2 2 (UBC2).